The primary structure comprises 337 residues: Protein-methionine-sulfoxide reductase catalytic subunit MsrP (337 aa).

The segment at residues 1–48 (MLIKIPSRSDCSESEVTSETLYLSRRRLLGASFAGLALASGLPRLGFA) is a signal peptide (tat-type signal). Mo-molybdopterin contacts are provided by residues Asn94, 97–98 (YE), Cys152, Thr187, Asn237, Arg242, and 253–255 (SIK).

It belongs to the MsrP family. In terms of assembly, heterodimer of a catalytic subunit (MsrP) and a heme-binding subunit (MsrQ). It depends on Mo-molybdopterin as a cofactor. In terms of processing, predicted to be exported by the Tat system. The position of the signal peptide cleavage has not been experimentally proven.

The protein resides in the periplasm. It carries out the reaction L-methionyl-[protein] + a quinone + H2O = L-methionyl-(S)-S-oxide-[protein] + a quinol. The enzyme catalyses L-methionyl-[protein] + a quinone + H2O = L-methionyl-(R)-S-oxide-[protein] + a quinol. In terms of biological role, part of the MsrPQ system that repairs oxidized periplasmic proteins containing methionine sulfoxide residues (Met-O), using respiratory chain electrons. Thus protects these proteins from oxidative-stress damage caused by reactive species of oxygen and chlorine generated by the host defense mechanisms. MsrPQ is essential for the maintenance of envelope integrity under bleach stress, rescuing a wide series of structurally unrelated periplasmic proteins from methionine oxidation. The catalytic subunit MsrP is non-stereospecific, being able to reduce both (R-) and (S-) diastereoisomers of methionine sulfoxide. The chain is Protein-methionine-sulfoxide reductase catalytic subunit MsrP from Pseudomonas aeruginosa (strain ATCC 15692 / DSM 22644 / CIP 104116 / JCM 14847 / LMG 12228 / 1C / PRS 101 / PAO1).